Here is a 105-residue protein sequence, read N- to C-terminus: Large ribosomal subunit protein uL24 (105 aa).

This sequence belongs to the universal ribosomal protein uL24 family. As to quaternary structure, part of the 50S ribosomal subunit.

Functionally, one of two assembly initiator proteins, it binds directly to the 5'-end of the 23S rRNA, where it nucleates assembly of the 50S subunit. One of the proteins that surrounds the polypeptide exit tunnel on the outside of the subunit. This chain is Large ribosomal subunit protein uL24, found in Vibrio campbellii (strain ATCC BAA-1116).